Reading from the N-terminus, the 620-residue chain is Glutathione-regulated potassium-efflux system protein KefC (620 aa).

12 consecutive transmembrane segments (helical) span residues 4-24, 26-46, 54-74, 90-110, 114-134, 149-169, 178-198, 218-238, 270-290, 294-314, 327-347, and 359-379; these read HTLI…PIAV, LGLG…PWGL, SILH…GLEL, GALQ…LLGL, VAEL…MQAM, FAVL…IPLL, MGAF…VVLL, VFSA…EEVG, GLLL…GTLL, LRIV…LWLI, WFAV…GTAQ, and SLTL…VILN. In terms of domain architecture, RCK N-terminal spans 399 to 518; sequence QPRVIIAGFG…AGVEKPERET (120 aa). The segment at 597–620 is disordered; it reads GWQGTEEGKHTGNMADEPETKPSS.

This sequence belongs to the monovalent cation:proton antiporter 2 (CPA2) transporter (TC 2.A.37) family. KefC subfamily. In terms of assembly, homodimer. Interacts with the regulatory subunit KefF.

The protein localises to the cell inner membrane. Its function is as follows. Pore-forming subunit of a potassium efflux system that confers protection against electrophiles. Catalyzes K(+)/H(+) antiport. This Shigella sonnei (strain Ss046) protein is Glutathione-regulated potassium-efflux system protein KefC.